The chain runs to 373 residues: Chaperone protein DnaJ (373 aa).

One can recognise a J domain in the interval 4–68 (DYYEILGLTK…VKREQYNQFG (65 aa)). The CR-type zinc finger occupies 142-224 (GKEIVEPLEK…CKGKTHTKTT (83 aa)). Zn(2+) is bound by residues Cys155, Cys158, Cys172, Cys175, Cys198, Cys201, Cys212, and Cys215. 4 CXXCXGXG motif repeats span residues 155-162 (CNTCNGSG), 172-179 (CTQCSGMG), 198-205 (CSKCNGIG), and 212-219 (CLICKGKT).

It belongs to the DnaJ family. Homodimer. The cofactor is Zn(2+).

It is found in the cytoplasm. Its function is as follows. Participates actively in the response to hyperosmotic and heat shock by preventing the aggregation of stress-denatured proteins and by disaggregating proteins, also in an autonomous, DnaK-independent fashion. Unfolded proteins bind initially to DnaJ; upon interaction with the DnaJ-bound protein, DnaK hydrolyzes its bound ATP, resulting in the formation of a stable complex. GrpE releases ADP from DnaK; ATP binding to DnaK triggers the release of the substrate protein, thus completing the reaction cycle. Several rounds of ATP-dependent interactions between DnaJ, DnaK and GrpE are required for fully efficient folding. Also involved, together with DnaK and GrpE, in the DNA replication of plasmids through activation of initiation proteins. This is Chaperone protein DnaJ from Mycoplasma mobile (strain ATCC 43663 / 163K / NCTC 11711) (Mesomycoplasma mobile).